The following is an 81-amino-acid chain: Sulfur carrier protein TusA (81 aa).

The Cysteine persulfide intermediate role is filled by Cys19.

Belongs to the sulfur carrier protein TusA family. As to quaternary structure, interacts with IscS.

Its subcellular location is the cytoplasm. The protein operates within tRNA modification. Functionally, sulfur carrier protein involved in sulfur trafficking in the cell. Part of a sulfur-relay system required for 2-thiolation during synthesis of 2-thiouridine of the modified wobble base 5-methylaminomethyl-2-thiouridine (mnm(5)s(2)U) in tRNA. Interacts with IscS and stimulates its cysteine desulfurase activity. Accepts an activated sulfur from IscS, which is then transferred to TusD, and thus determines the direction of sulfur flow from IscS to 2-thiouridine formation. Also appears to be involved in sulfur transfer for the biosynthesis of molybdopterin. This is Sulfur carrier protein TusA from Citrobacter koseri (strain ATCC BAA-895 / CDC 4225-83 / SGSC4696).